Consider the following 103-residue polypeptide: MYAVFQSGGKQHRVEAGHTVRLEKLEVATGETIEFDQVLLVADGETVHVGAPLVEGGKVVAEVVSHGRAEKVTIVKFRRRKHHDKKMGHRQWFTEVKITAISA.

This sequence belongs to the bacterial ribosomal protein bL21 family. As to quaternary structure, part of the 50S ribosomal subunit. Contacts protein L20.

In terms of biological role, this protein binds to 23S rRNA in the presence of protein L20. This Shewanella piezotolerans (strain WP3 / JCM 13877) protein is Large ribosomal subunit protein bL21.